A 291-amino-acid polypeptide reads, in one-letter code: Arabinogalactan O-methyltransferase 2 (291 aa).

A helical membrane pass occupies residues W18–I38.

The protein belongs to the methyltransferase superfamily.

It localises to the golgi apparatus membrane. In terms of biological role, involved in the methylation of glucuronic acid of different plant cell wall component, but mainly on side chains of arabinogalactans. This is Arabinogalactan O-methyltransferase 2 from Arabidopsis thaliana (Mouse-ear cress).